The following is a 1370-amino-acid chain: Major capsid protein (1370 aa).

Belongs to the herpesviridae major capsid protein family. In terms of assembly, homomultimer. Makes the hexons and eleven out of twelve pentons. Interacts with triplex proteins 1/TRX1 and 2/TRX2; adjacent capsomers are linked together in groups of three by triplexes, heterotrimeric complexes composed of one molecule of TRX1 and two molecules of TRX2. Interacts with scaffold protein; this interaction allows efficient MCP transport to the host nucleus. Interacts with capsid vertex component 2/CVC2. Interacts with the small capsomere-interacting protein/SCP.

The protein localises to the virion. It localises to the host nucleus. Functionally, self-assembles to form an icosahedral capsid with a T=16 symmetry, about 200 nm in diameter, and consisting of 150 hexons and 12 pentons (total of 162 capsomers). Hexons form the edges and faces of the capsid and are each composed of six MCP molecules. In contrast, one penton is found at each of the 12 vertices. Eleven of the pentons are MCP pentamers, while the last vertex is occupied by the portal complex. The capsid is surrounded by a layer of proteinaceous material designated the tegument which, in turn, is enclosed in an envelope of host cell-derived lipids containing virus-encoded glycoproteins. The sequence is that of Major capsid protein from Human cytomegalovirus (strain AD169) (HHV-5).